Reading from the N-terminus, the 120-residue chain is NAD(P)H-quinone oxidoreductase subunit 3, chloroplastic (120 aa).

3 consecutive transmembrane segments (helical) span residues 9 to 29, 64 to 84, and 88 to 108; these read IFWA…FISG, MFAL…PWAM, and VLGV…IVGL.

It belongs to the complex I subunit 3 family. In terms of assembly, NDH is composed of at least 16 different subunits, 5 of which are encoded in the nucleus.

Its subcellular location is the plastid. It localises to the chloroplast thylakoid membrane. The enzyme catalyses a plastoquinone + NADH + (n+1) H(+)(in) = a plastoquinol + NAD(+) + n H(+)(out). It catalyses the reaction a plastoquinone + NADPH + (n+1) H(+)(in) = a plastoquinol + NADP(+) + n H(+)(out). Its function is as follows. NDH shuttles electrons from NAD(P)H:plastoquinone, via FMN and iron-sulfur (Fe-S) centers, to quinones in the photosynthetic chain and possibly in a chloroplast respiratory chain. The immediate electron acceptor for the enzyme in this species is believed to be plastoquinone. Couples the redox reaction to proton translocation, and thus conserves the redox energy in a proton gradient. The protein is NAD(P)H-quinone oxidoreductase subunit 3, chloroplastic of Lactuca sativa (Garden lettuce).